The primary structure comprises 306 residues: Dermonecrotic toxin LiSicTox-alphaIA2bi (306 aa).

An N-terminal signal peptide occupies residues 1–18; the sequence is MLPYIALILVCWSVLSQA. Positions 19-26 are excised as a propeptide; sequence AQTDVEGR. His38 is an active-site residue. Residues Glu58 and Asp60 each coordinate Mg(2+). Residue His74 is the Nucleophile of the active site. 2 disulfide bridges follow: Cys78/Cys84 and Cys80/Cys223. Asp118 contacts Mg(2+). Asn283 carries N-linked (GlcNAc...) asparagine glycosylation.

It belongs to the arthropod phospholipase D family. Class II subfamily. The cofactor is Mg(2+). Expressed by the venom gland.

Its subcellular location is the secreted. It catalyses the reaction an N-(acyl)-sphingosylphosphocholine = an N-(acyl)-sphingosyl-1,3-cyclic phosphate + choline. It carries out the reaction an N-(acyl)-sphingosylphosphoethanolamine = an N-(acyl)-sphingosyl-1,3-cyclic phosphate + ethanolamine. The enzyme catalyses a 1-acyl-sn-glycero-3-phosphocholine = a 1-acyl-sn-glycero-2,3-cyclic phosphate + choline. The catalysed reaction is a 1-acyl-sn-glycero-3-phosphoethanolamine = a 1-acyl-sn-glycero-2,3-cyclic phosphate + ethanolamine. Its function is as follows. Dermonecrotic toxins cleave the phosphodiester linkage between the phosphate and headgroup of certain phospholipids (sphingolipid and lysolipid substrates), forming an alcohol (often choline) and a cyclic phosphate. This toxin acts on sphingomyelin (SM). It may also act on ceramide phosphoethanolamine (CPE), lysophosphatidylcholine (LPC) and lysophosphatidylethanolamine (LPE), but not on lysophosphatidylserine (LPS), and lysophosphatidylglycerol (LPG). It acts by transphosphatidylation, releasing exclusively cyclic phosphate products as second products. Induces dermonecrosis, hemolysis, increased vascular permeability, edema, inflammatory response, and platelet aggregation. This is Dermonecrotic toxin LiSicTox-alphaIA2bi from Loxosceles intermedia (Brown spider).